The primary structure comprises 95 residues: Protein TusB (95 aa).

This sequence belongs to the DsrH/TusB family. As to quaternary structure, heterohexamer, formed by a dimer of trimers. The hexameric TusBCD complex contains 2 copies each of TusB, TusC and TusD. The TusBCD complex interacts with TusE.

It is found in the cytoplasm. Functionally, part of a sulfur-relay system required for 2-thiolation of 5-methylaminomethyl-2-thiouridine (mnm(5)s(2)U) at tRNA wobble positions. The sequence is that of Protein TusB from Yersinia enterocolitica serotype O:8 / biotype 1B (strain NCTC 13174 / 8081).